We begin with the raw amino-acid sequence, 186 residues long: Large ribosomal subunit protein bL12c (186 aa).

A compositionally biased stretch (polar residues) spans 1 to 11; the sequence is MASTLSTITLR. Residues 1–24 form a disordered region; the sequence is MASTLSTITLRSPSPSTATSTHAS. The transit peptide at 1 to 53 directs the protein to the chloroplast; it reads MASTLSTITLRSPSPSTATSTHASIPFPKKTLEFPIRTPKLQNRRATFLRPLA. Low complexity predominate over residues 12–24; sequence SPSPSTATSTHAS.

The protein belongs to the bacterial ribosomal protein bL12 family.

Its subcellular location is the plastid. It localises to the chloroplast. This chain is Large ribosomal subunit protein bL12c, found in Nicotiana sylvestris (Wood tobacco).